Reading from the N-terminus, the 544-residue chain is Lysophosphatidylcholine acyltransferase 2 (544 aa).

The Cytoplasmic segment spans residues 1-58 (MNRCAEAAAVAATVPGSGVGDAGLRPPMVPRQASFFPPPVPNPFVQQTTISASRRLQM). The chain crosses the membrane as a helical; Signal-anchor for type II membrane protein span at residues 59-79 (FLLGIILLPVRALLVGIILLL). The Lumenal portion of the chain corresponds to 80-544 (AWPFAVISTA…EEGTSDKKVD (465 aa)). The short motif at 146-151 (HSTFFD) is the HXXXXD motif element. The short motif at 220–223 (EGTC) is the EGTC motif element. EF-hand domains are found at residues 391 to 426 (PVSD…LCNP) and 428 to 463 (NTEE…SLGV). Ca(2+) contacts are provided by Asp-404, Asn-406, Asp-408, Ser-410, Glu-415, Asp-441, Asp-443, Asp-445, Tyr-447, and Glu-452. Polar residues predominate over residues 520 to 532 (TAPSVASNKVSPE). The segment at 520 to 544 (TAPSVASNKVSPESQEEGTSDKKVD) is disordered.

The protein belongs to the 1-acyl-sn-glycerol-3-phosphate acyltransferase family. In terms of tissue distribution, highest expression is found in resident macrophages and casein-induced neutrophils followed by skin, colon, spleen and thioglycollate-induced macrophages. Detected in erythroleukemic cells but not in reticulocytes.

Its subcellular location is the endoplasmic reticulum membrane. It localises to the golgi apparatus membrane. The protein localises to the cell membrane. The protein resides in the lipid droplet. The catalysed reaction is a 1-acyl-sn-glycero-3-phosphocholine + an acyl-CoA = a 1,2-diacyl-sn-glycero-3-phosphocholine + CoA. It catalyses the reaction a 1-O-alkyl-sn-glycero-3-phosphocholine + acetyl-CoA = a 1-O-alkyl-2-acetyl-sn-glycero-3-phosphocholine + CoA. It carries out the reaction a 1-acyl-sn-glycero-3-phosphate + an acyl-CoA = a 1,2-diacyl-sn-glycero-3-phosphate + CoA. The enzyme catalyses a 1-O-(1Z-alkenyl)-sn-glycero-3-phosphocholine + an acyl-CoA = a 1-O-(1Z-alkenyl)-2-acyl-sn-glycero-3-phosphocholine + CoA. The catalysed reaction is 1-O-octadecyl-sn-glycero-3-phosphocholine + acetyl-CoA = 1-O-octadecyl-2-acetyl-sn-glycero-3-phosphocholine + CoA. It catalyses the reaction 1-hexadecanoyl-sn-glycero-3-phosphocholine + acetyl-CoA = 1-hexadecanoyl-2-acetyl-sn-glycero-3-phosphocholine + CoA. It carries out the reaction 1-octadecanoyl-sn-glycero-3-phosphocholine + acetyl-CoA = 1-octadecanoyl-2-acetyl-sn-glycero-3-phosphocholine + CoA. The enzyme catalyses a 1-O-(1Z-alkenyl)-sn-glycero-3-phosphocholine + acetyl-CoA = 1-O-(1Z)-alkenyl-2-acetyl-sn-glycero-3-phosphocholine + CoA. The catalysed reaction is 1-O-hexadecyl-sn-glycero-3-phosphocholine + acetyl-CoA = 1-O-hexadecyl-2-acetyl-sn-glycero-3-phosphocholine + CoA. It catalyses the reaction 1-O-octadecyl-sn-glycero-3-phosphocholine + (5Z,8Z,11Z,14Z)-eicosatetraenoyl-CoA = 1-O-octadecyl-2-(5Z,8Z,11Z,14Z)-eicosatetraenoyl-sn-glycero-3-phosphocholine + CoA. It carries out the reaction 1-hexadecanoyl-sn-glycero-3-phosphate + (9Z)-octadecenoyl-CoA = 1-hexadecanoyl-2-(9Z-octadecenoyl)-sn-glycero-3-phosphate + CoA. The enzyme catalyses 1-(9Z-octadecenoyl)-sn-glycero-3-phosphate + (9Z)-octadecenoyl-CoA = 1,2-di-(9Z-octadecenoyl)-sn-glycero-3-phosphate + CoA. The catalysed reaction is 1-(9Z-octadecenoyl)-sn-glycero-3-phosphate + hexadecanoyl-CoA = 1-(9Z)-octadecenoyl-2-hexadecanoyl-sn-glycero-3-phosphate + CoA. It catalyses the reaction 1-heptadecanoyl-sn-glycero-3-phosphate + (9Z)-octadecenoyl-CoA = 1-heptadecanoyl-2-(9Z)-octadecenoyl-sn-glycero-3-phosphate + CoA. It carries out the reaction 1-octadecanoyl-sn-glycero-3-phosphate + (9Z)-octadecenoyl-CoA = 1-octadecanoyl-2-(9Z-octadecenoyl)-sn-glycero-3-phosphate + CoA. The enzyme catalyses heptadecanoyl-CoA + 1-(9Z-octadecenoyl)-sn-glycero-3-phosphate = 1-(9Z)-octadecenoyl-2-heptadecanoyl-sn-glycero-3-phosphate + CoA. The catalysed reaction is 1-(9Z-octadecenoyl)-sn-glycero-3-phosphate + (9Z,12Z)-octadecadienoyl-CoA = 1-(9Z)-octadecenoyl-2-(9Z,12Z)-octadecadienoyl-sn-glycero-3-phosphate + CoA. It catalyses the reaction 1-(9Z-octadecenoyl)-sn-glycero-3-phosphate + tetradecanoyl-CoA = 1-(9Z)-octadecenoyl-2-tetradecanoyl-sn-glycero-3-phosphate + CoA. It carries out the reaction pentadecanoyl-CoA + 1-(9Z-octadecenoyl)-sn-glycero-3-phosphate = 1-(9Z)-octadecenoyl-2-pentadecanoyl-sn-glycero-3-phosphate + CoA. The enzyme catalyses nonadecanoyl-CoA + 1-(9Z-octadecenoyl)-sn-glycero-3-phosphate = 1-(9Z)-octadecenoyl-2-nonadecanoyl-sn-glycero-3-phosphate + CoA. The catalysed reaction is 1-hexadecanoyl-sn-glycero-3-phosphocholine + (9Z)-octadecenoyl-CoA = 1-hexadecanoyl-2-(9Z-octadecenoyl)-sn-glycero-3-phosphocholine + CoA. Its pathway is lipid metabolism; phospholipid metabolism. Its activity is regulated as follows. Acetyltransferase activity is increased following acute inflammatory stimulation by lipopolysaccharide (LPS). Acyltransferase activity is unchanged. Functionally, exhibits both acyltransferase and acetyltransferase activities. Activity is calcium-dependent. Catalyzes the conversion of lysophosphatidylcholine (1-acyl-sn-glycero-3-phosphocholine or LPC) into phosphatidylcholine (1,2-diacyl-sn-glycero-3-phosphocholine or PC). Catalyzes the conversion 1-acyl-sn-glycerol-3-phosphate (lysophosphatidic acid or LPA) into 1,2-diacyl-sn-glycerol-3-phosphate (phosphatidic acid or PA) by incorporating an acyl moiety at the sn-2 position of the glycerol backbone. Involved in platelet-activating factor (PAF) biosynthesis by catalyzing the conversion of the PAF precursor, 1-O-alkyl-sn-glycero-3-phosphocholine (lyso-PAF) into 1-O-alkyl-2-acetyl-sn-glycero-3-phosphocholine (PAF). Also converts lyso-PAF to 1-O-alkyl-2-acyl-sn-glycero-3-phosphocholine (PC), a major component of cell membranes and a PAF precursor. Under resting conditions, acyltransferase activity is preferred. Upon acute inflammatory stimulus, acetyltransferase activity is enhanced and PAF synthesis increases. Involved in the regulation of lipid droplet number and size. The polypeptide is Lysophosphatidylcholine acyltransferase 2 (Lpcat2) (Mus musculus (Mouse)).